The primary structure comprises 296 residues: 4-hydroxybenzoate octaprenyltransferase (296 aa).

The next 9 helical transmembrane spans lie at 29–49 (IGIY…AEGV), 55–75 (LFIF…INDY), 102–122 (ALVL…FTNA), 124–141 (TIWL…YPFM), 146–166 (FYPQ…AFTA), 169–189 (GSLP…TVAY), 216–236 (ADRL…LLAG), 239–259 (FELG…FVWE), and 271–291 (CFNA…GIVL).

Belongs to the UbiA prenyltransferase family. It depends on Mg(2+) as a cofactor.

Its subcellular location is the cell inner membrane. The enzyme catalyses all-trans-octaprenyl diphosphate + 4-hydroxybenzoate = 4-hydroxy-3-(all-trans-octaprenyl)benzoate + diphosphate. It participates in cofactor biosynthesis; ubiquinone biosynthesis. Catalyzes the prenylation of para-hydroxybenzoate (PHB) with an all-trans polyprenyl group. Mediates the second step in the final reaction sequence of ubiquinone-8 (UQ-8) biosynthesis, which is the condensation of the polyisoprenoid side chain with PHB, generating the first membrane-bound Q intermediate 3-octaprenyl-4-hydroxybenzoate. This chain is 4-hydroxybenzoate octaprenyltransferase, found in Ectopseudomonas mendocina (strain ymp) (Pseudomonas mendocina).